The following is a 450-amino-acid chain: Histidinol dehydrogenase (450 aa).

Positions 135, 197, and 225 each coordinate NAD(+). Substrate-binding residues include Thr248, Gln270, and His273. Residues Gln270 and His273 each contribute to the Zn(2+) site. Residues Glu339 and His340 each act as proton acceptor in the active site. 4 residues coordinate substrate: His340, Asp373, Glu427, and His432. Residue Asp373 coordinates Zn(2+). Residue His432 coordinates Zn(2+).

It belongs to the histidinol dehydrogenase family. It depends on Zn(2+) as a cofactor.

The enzyme catalyses L-histidinol + 2 NAD(+) + H2O = L-histidine + 2 NADH + 3 H(+). It participates in amino-acid biosynthesis; L-histidine biosynthesis; L-histidine from 5-phospho-alpha-D-ribose 1-diphosphate: step 9/9. Its function is as follows. Catalyzes the sequential NAD-dependent oxidations of L-histidinol to L-histidinaldehyde and then to L-histidine. The polypeptide is Histidinol dehydrogenase (Corynebacterium jeikeium (strain K411)).